Here is a 338-residue protein sequence, read N- to C-terminus: Ketol-acid reductoisomerase (NADP(+)) (338 aa).

In terms of domain architecture, KARI N-terminal Rossmann spans 1 to 181; it reads MKVFYDKDAD…GGGRAGIIET (181 aa). Residues 24 to 27, R47, and S52 contribute to the NADP(+) site; that span reads YGSQ. The active site involves H107. Residue G133 coordinates NADP(+). The region spanning 182–327 is the KARI C-terminal knotted domain; the sequence is NFREETETDL…SKLRAMMPWI (146 aa). 4 residues coordinate Mg(2+): D190, E194, E226, and E230. S251 is a binding site for substrate.

It belongs to the ketol-acid reductoisomerase family. It depends on Mg(2+) as a cofactor.

It catalyses the reaction (2R)-2,3-dihydroxy-3-methylbutanoate + NADP(+) = (2S)-2-acetolactate + NADPH + H(+). The enzyme catalyses (2R,3R)-2,3-dihydroxy-3-methylpentanoate + NADP(+) = (S)-2-ethyl-2-hydroxy-3-oxobutanoate + NADPH + H(+). Its pathway is amino-acid biosynthesis; L-isoleucine biosynthesis; L-isoleucine from 2-oxobutanoate: step 2/4. The protein operates within amino-acid biosynthesis; L-valine biosynthesis; L-valine from pyruvate: step 2/4. Its function is as follows. Involved in the biosynthesis of branched-chain amino acids (BCAA). Catalyzes an alkyl-migration followed by a ketol-acid reduction of (S)-2-acetolactate (S2AL) to yield (R)-2,3-dihydroxy-isovalerate. In the isomerase reaction, S2AL is rearranged via a Mg-dependent methyl migration to produce 3-hydroxy-3-methyl-2-ketobutyrate (HMKB). In the reductase reaction, this 2-ketoacid undergoes a metal-dependent reduction by NADPH to yield (R)-2,3-dihydroxy-isovalerate. In Burkholderia mallei (strain NCTC 10229), this protein is Ketol-acid reductoisomerase (NADP(+)).